We begin with the raw amino-acid sequence, 534 residues long: CTP synthase (534 aa).

The amidoligase domain stretch occupies residues Met-1–Leu-267. Ser-13 is a binding site for CTP. Ser-13 is a binding site for UTP. Ser-14–Ile-19 is an ATP binding site. Tyr-54 contributes to the L-glutamine binding site. Asp-71 is a binding site for ATP. Mg(2+) is bound by residues Asp-71 and Glu-141. CTP contacts are provided by residues Asp-148 to Glu-150, Lys-188 to Gln-193, and Lys-224. Residues Lys-188–Gln-193 and Lys-224 each bind UTP. Arg-240–Val-242 contacts ATP. The 243-residue stretch at Lys-292–Asn-534 folds into the Glutamine amidotransferase type-1 domain. Gly-354 lines the L-glutamine pocket. The active-site Nucleophile; for glutamine hydrolysis is Cys-381. Residues Leu-382–Gln-385, Glu-405, and Arg-463 each bind L-glutamine. Catalysis depends on residues His-508 and Glu-510.

The protein belongs to the CTP synthase family. Homotetramer.

It catalyses the reaction UTP + L-glutamine + ATP + H2O = CTP + L-glutamate + ADP + phosphate + 2 H(+). It carries out the reaction L-glutamine + H2O = L-glutamate + NH4(+). The catalysed reaction is UTP + NH4(+) + ATP = CTP + ADP + phosphate + 2 H(+). Its pathway is pyrimidine metabolism; CTP biosynthesis via de novo pathway; CTP from UDP: step 2/2. Its activity is regulated as follows. Allosterically activated by GTP, when glutamine is the substrate; GTP has no effect on the reaction when ammonia is the substrate. The allosteric effector GTP functions by stabilizing the protein conformation that binds the tetrahedral intermediate(s) formed during glutamine hydrolysis. Inhibited by the product CTP, via allosteric rather than competitive inhibition. In terms of biological role, catalyzes the ATP-dependent amination of UTP to CTP with either L-glutamine or ammonia as the source of nitrogen. Regulates intracellular CTP levels through interactions with the four ribonucleotide triphosphates. This chain is CTP synthase, found in Streptococcus pyogenes serotype M1.